Reading from the N-terminus, the 487-residue chain is ATP synthase subunit beta (487 aa).

Residue 164–171 (GGAGVGKT) coordinates ATP.

The protein belongs to the ATPase alpha/beta chains family. In terms of assembly, F-type ATPases have 2 components, CF(1) - the catalytic core - and CF(0) - the membrane proton channel. CF(1) has five subunits: alpha(3), beta(3), gamma(1), delta(1), epsilon(1). CF(0) has four main subunits: a(1), b(1), b'(1) and c(9-12).

Its subcellular location is the cellular thylakoid membrane. The enzyme catalyses ATP + H2O + 4 H(+)(in) = ADP + phosphate + 5 H(+)(out). In terms of biological role, produces ATP from ADP in the presence of a proton gradient across the membrane. The catalytic sites are hosted primarily by the beta subunits. The polypeptide is ATP synthase subunit beta (Synechococcus sp. (strain CC9311)).